A 347-amino-acid polypeptide reads, in one-letter code: tRNA N6-adenosine threonylcarbamoyltransferase (347 aa).

Residues His-115 and His-119 each coordinate Fe cation. Substrate-binding positions include 138–142 (LVSGG), Asp-171, Gly-184, and Asn-277. Asp-305 is a Fe cation binding site.

Belongs to the KAE1 / TsaD family. Fe(2+) is required as a cofactor.

Its subcellular location is the cytoplasm. It catalyses the reaction L-threonylcarbamoyladenylate + adenosine(37) in tRNA = N(6)-L-threonylcarbamoyladenosine(37) in tRNA + AMP + H(+). Required for the formation of a threonylcarbamoyl group on adenosine at position 37 (t(6)A37) in tRNAs that read codons beginning with adenine. Is involved in the transfer of the threonylcarbamoyl moiety of threonylcarbamoyl-AMP (TC-AMP) to the N6 group of A37, together with TsaE and TsaB. TsaD likely plays a direct catalytic role in this reaction. This Polaromonas sp. (strain JS666 / ATCC BAA-500) protein is tRNA N6-adenosine threonylcarbamoyltransferase.